A 363-amino-acid chain; its full sequence is Peptide chain release factor 1 (363 aa).

Gln236 is modified (N5-methylglutamine). Residues 286–305 (KKEMERSTMRKSQIGSGDRS) form a disordered region.

Belongs to the prokaryotic/mitochondrial release factor family. Post-translationally, methylated by PrmC. Methylation increases the termination efficiency of RF1.

The protein resides in the cytoplasm. In terms of biological role, peptide chain release factor 1 directs the termination of translation in response to the peptide chain termination codons UAG and UAA. The chain is Peptide chain release factor 1 from Wolbachia pipientis subsp. Culex pipiens (strain wPip).